Reading from the N-terminus, the 280-residue chain is Alpha-methyl-mannoside-specific lectin (280 aa).

A signal peptide spans 1 to 26 (MAISKKILPLLSIATIFLLLLNKAHS). A carbohydrate contacts are provided by Asp114 and Gly134. 2 residues coordinate Mn(2+): Glu156 and Asp158. Residues Asp158 and Phe160 each contribute to the Ca(2+) site. A carbohydrate-binding residues include Ser165 and Asn166. Ca(2+) is bound by residues Asn166 and Asp169. Mn(2+) contacts are provided by Asp169 and His174. A carbohydrate is bound by residues Gly248 and Gln250.

It belongs to the leguminous lectin family. In terms of assembly, homodimer. Glycosylated.

Its function is as follows. Alpha-methyl-D-mannoside-specific lectin. Has hemagglutinating activity towards rabbit erythrocytes. Binds to cytokinins and significantly inhibits physiological effects of cytokinin activity such as cotyledon expansion and delayed leaf senescence. The chain is Alpha-methyl-mannoside-specific lectin from Arachis hypogaea (Peanut).